Here is a 743-residue protein sequence, read N- to C-terminus: Threonine synthase-like 1 (743 aa).

Lysine 281 is modified (N6-acetyllysine). Lysine 351 carries the post-translational modification N6-(pyridoxal phosphate)lysine.

This sequence belongs to the threonine synthase family. The cofactor is pyridoxal 5'-phosphate.

In Pongo abelii (Sumatran orangutan), this protein is Threonine synthase-like 1 (THNSL1).